Consider the following 432-residue polypeptide: Putative D-alanyl-D-alanine carboxypeptidase (432 aa).

Residues 7 to 25 form a helical; Signal-anchor membrane-spanning segment; the sequence is ATVLLTFSLSAFAVEYPVL.

This sequence belongs to the peptidase S12 family. YfeW subfamily.

It is found in the cell inner membrane. The enzyme catalyses Preferential cleavage: (Ac)2-L-Lys-D-Ala-|-D-Ala. Also transpeptidation of peptidyl-alanyl moieties that are N-acyl substituents of D-alanine.. The protein is Putative D-alanyl-D-alanine carboxypeptidase of Salmonella paratyphi A (strain ATCC 9150 / SARB42).